A 257-amino-acid polypeptide reads, in one-letter code: Adenosylcobinamide-GDP ribazoletransferase (257 aa).

The next 6 membrane-spanning stretches (helical) occupy residues 7-27 (QLTL…PTWV), 39-59 (RYFG…YEIT), 61-81 (GFLP…VVTG), 113-133 (IGTY…ILLS), 143-163 (VVTA…SLIF), and 196-216 (VLVL…GLVL).

It belongs to the CobS family. Requires Mg(2+) as cofactor.

It localises to the cell inner membrane. It catalyses the reaction alpha-ribazole + adenosylcob(III)inamide-GDP = adenosylcob(III)alamin + GMP + H(+). It carries out the reaction alpha-ribazole 5'-phosphate + adenosylcob(III)inamide-GDP = adenosylcob(III)alamin 5'-phosphate + GMP + H(+). It functions in the pathway cofactor biosynthesis; adenosylcobalamin biosynthesis; adenosylcobalamin from cob(II)yrinate a,c-diamide: step 7/7. Functionally, joins adenosylcobinamide-GDP and alpha-ribazole to generate adenosylcobalamin (Ado-cobalamin). Also synthesizes adenosylcobalamin 5'-phosphate from adenosylcobinamide-GDP and alpha-ribazole 5'-phosphate. This chain is Adenosylcobinamide-GDP ribazoletransferase, found in Shewanella woodyi (strain ATCC 51908 / MS32).